Consider the following 187-residue polypeptide: ATP-dependent protease subunit HslV (187 aa).

Threonine 7 is an active-site residue. Positions 162, 165, and 168 each coordinate Na(+).

It belongs to the peptidase T1B family. HslV subfamily. A double ring-shaped homohexamer of HslV is capped on each side by a ring-shaped HslU homohexamer. The assembly of the HslU/HslV complex is dependent on binding of ATP.

The protein resides in the cytoplasm. The enzyme catalyses ATP-dependent cleavage of peptide bonds with broad specificity.. Its activity is regulated as follows. Allosterically activated by HslU binding. Protease subunit of a proteasome-like degradation complex believed to be a general protein degrading machinery. The chain is ATP-dependent protease subunit HslV from Methylococcus capsulatus (strain ATCC 33009 / NCIMB 11132 / Bath).